The chain runs to 311 residues: N-acetylmuramic acid 6-phosphate etherase (311 aa).

The SIS domain maps to 66–229 (VADRMARGGR…STITMIRLGK (164 aa)). Glutamate 94 acts as the Proton donor in catalysis. Residue glutamate 125 is part of the active site.

Belongs to the GCKR-like family. MurNAc-6-P etherase subfamily. As to quaternary structure, homodimer.

The catalysed reaction is N-acetyl-D-muramate 6-phosphate + H2O = N-acetyl-D-glucosamine 6-phosphate + (R)-lactate. It participates in amino-sugar metabolism; N-acetylmuramate degradation. In terms of biological role, specifically catalyzes the cleavage of the D-lactyl ether substituent of MurNAc 6-phosphate, producing GlcNAc 6-phosphate and D-lactate. This Streptomyces avermitilis (strain ATCC 31267 / DSM 46492 / JCM 5070 / NBRC 14893 / NCIMB 12804 / NRRL 8165 / MA-4680) protein is N-acetylmuramic acid 6-phosphate etherase.